Consider the following 274-residue polypeptide: 3-methyl-2-oxobutanoate hydroxymethyltransferase (274 aa).

Mg(2+)-binding residues include Asp-44 and Asp-83. Residues 44-45 (DS), Asp-83, and Lys-113 each bind 3-methyl-2-oxobutanoate. A Mg(2+)-binding site is contributed by Glu-115. Glu-182 functions as the Proton acceptor in the catalytic mechanism.

Belongs to the PanB family. In terms of assembly, homodecamer; pentamer of dimers. Mg(2+) serves as cofactor.

It localises to the cytoplasm. It catalyses the reaction 3-methyl-2-oxobutanoate + (6R)-5,10-methylene-5,6,7,8-tetrahydrofolate + H2O = 2-dehydropantoate + (6S)-5,6,7,8-tetrahydrofolate. It functions in the pathway cofactor biosynthesis; (R)-pantothenate biosynthesis; (R)-pantoate from 3-methyl-2-oxobutanoate: step 1/2. Functionally, catalyzes the reversible reaction in which hydroxymethyl group from 5,10-methylenetetrahydrofolate is transferred onto alpha-ketoisovalerate to form ketopantoate. The polypeptide is 3-methyl-2-oxobutanoate hydroxymethyltransferase (Campylobacter jejuni subsp. jejuni serotype O:23/36 (strain 81-176)).